A 565-amino-acid chain; its full sequence is CTP synthase (565 aa).

An amidoligase domain region spans residues 1–272 (MARPKNVKHI…DLRVLKKLGL (272 aa)). Position 18 (Ser-18) interacts with CTP. Residue Ser-18 participates in UTP binding. 19–24 (SLGKGI) provides a ligand contact to ATP. Tyr-59 is an L-glutamine binding site. Residue Asp-76 participates in ATP binding. 2 residues coordinate Mg(2+): Asp-76 and Glu-146. CTP-binding positions include 153–155 (DIE), 193–198 (KTKPTQ), and Lys-229. UTP-binding positions include 193–198 (KTKPTQ) and Lys-229. The Glutamine amidotransferase type-1 domain occupies 299–543 (TIGICGKYTE…VAAAKEYAHG (245 aa)). Gly-363 is a binding site for L-glutamine. Cys-390 serves as the catalytic Nucleophile; for glutamine hydrolysis. L-glutamine is bound by residues 391–394 (LGMQ), Glu-414, and Arg-471. Residues His-516 and Glu-518 contribute to the active site.

The protein belongs to the CTP synthase family. Homotetramer.

The catalysed reaction is UTP + L-glutamine + ATP + H2O = CTP + L-glutamate + ADP + phosphate + 2 H(+). It carries out the reaction L-glutamine + H2O = L-glutamate + NH4(+). It catalyses the reaction UTP + NH4(+) + ATP = CTP + ADP + phosphate + 2 H(+). Its pathway is pyrimidine metabolism; CTP biosynthesis via de novo pathway; CTP from UDP: step 2/2. Allosterically activated by GTP, when glutamine is the substrate; GTP has no effect on the reaction when ammonia is the substrate. The allosteric effector GTP functions by stabilizing the protein conformation that binds the tetrahedral intermediate(s) formed during glutamine hydrolysis. Inhibited by the product CTP, via allosteric rather than competitive inhibition. Its function is as follows. Catalyzes the ATP-dependent amination of UTP to CTP with either L-glutamine or ammonia as the source of nitrogen. Regulates intracellular CTP levels through interactions with the four ribonucleotide triphosphates. In Pelodictyon phaeoclathratiforme (strain DSM 5477 / BU-1), this protein is CTP synthase.